The sequence spans 339 residues: Protein FAM50A (339 aa).

Residues 1–31 (MAQYKGAASEAGRAMHLMKKREKQREQMEQM) form a disordered region. Position 2 is an N-acetylalanine (Ala-2). A Glycyl lysine isopeptide (Lys-Gly) (interchain with G-Cter in SUMO2) cross-link involves residue Lys-100. Residues 150–177 (TTKKKKLGKNPDVDTSFLPDRDREEEEN) form a disordered region. The Nuclear localization signal signature appears at 152 to 155 (KKKK). Positions 168–177 (PDRDREEEEN) are enriched in basic and acidic residues.

The protein belongs to the FAM50 family. Interacts with EFTUD2, a component of the spliceosome U5 complex. Interacts with DDX41, a component of the spliceosome C complex. Widely expressed in embryonic and adult tissues.

The protein resides in the nucleus. In terms of biological role, probably involved in the regulation of pre-mRNA splicing. The polypeptide is Protein FAM50A (Fam50a) (Mus musculus (Mouse)).